The chain runs to 294 residues: tRNA dimethylallyltransferase (294 aa).

Residue G10 to T17 participates in ATP binding. T12–T17 serves as a coordination point for substrate. The interaction with substrate tRNA stretch occupies residues D35 to Q38.

It belongs to the IPP transferase family. In terms of assembly, monomer. Mg(2+) is required as a cofactor.

It carries out the reaction adenosine(37) in tRNA + dimethylallyl diphosphate = N(6)-dimethylallyladenosine(37) in tRNA + diphosphate. Functionally, catalyzes the transfer of a dimethylallyl group onto the adenine at position 37 in tRNAs that read codons beginning with uridine, leading to the formation of N6-(dimethylallyl)adenosine (i(6)A). The chain is tRNA dimethylallyltransferase from Streptococcus pneumoniae serotype 2 (strain D39 / NCTC 7466).